Reading from the N-terminus, the 123-residue chain is Large ribosomal subunit protein uL18 (123 aa).

It belongs to the universal ribosomal protein uL18 family. In terms of assembly, part of the 50S ribosomal subunit; part of the 5S rRNA/L5/L18/L25 subcomplex. Contacts the 5S and 23S rRNAs.

In terms of biological role, this is one of the proteins that bind and probably mediate the attachment of the 5S RNA into the large ribosomal subunit, where it forms part of the central protuberance. This chain is Large ribosomal subunit protein uL18, found in Chlamydia caviae (strain ATCC VR-813 / DSM 19441 / 03DC25 / GPIC) (Chlamydophila caviae).